Here is a 1902-residue protein sequence, read N- to C-terminus: PII-type proteinase (1902 aa).

The first 33 residues, 1-33 (MQRKKKGLSILLAGTVALGALAVLPVGEIQAKA), serve as a signal peptide directing secretion. The propeptide occupies 34 to 187 (AISQQTKVSS…VTLAKVYYPT (154 aa)). The region spanning 191 to 697 (ANSMANVQAV…AGLVDVKAAI (507 aa)) is the Peptidase S8 domain. Active-site charge relay system residues include D217, H281, and S620. The segment covering 1793 to 1805 (KTAGKGDDTTGTS) has biased composition (low complexity). The disordered stretch occupies residues 1793 to 1872 (KTAGKGDDTT…GKGALPKTAE (80 aa)). Positions 1867-1871 (LPKTA) match the LPXTG sorting signal motif. T1870 carries the post-translational modification Pentaglycyl murein peptidoglycan amidated threonine. Residues 1871-1902 (AETTERPAFGFLGVIVVSLMGVLGLKRKQREE) constitute a propeptide, removed by sortase.

It belongs to the peptidase S8 family.

It localises to the secreted. The protein resides in the cell wall. The catalysed reaction is Endopeptidase activity with very broad specificity, although some subsite preference have been noted, e.g. large hydrophobic residues in the P1 and P4 positions, and Pro in the P2 position. Best known for its action on caseins, although it has been shown to hydrolyze hemoglobin and oxidized insulin B-chain.. Its function is as follows. Protease which breaks down milk proteins during the growth of the bacteria on milk. The polypeptide is PII-type proteinase (prtP) (Lacticaseibacillus paracasei (Lactobacillus paracasei)).